We begin with the raw amino-acid sequence, 154 residues long: MSNKFVITWDAMQTYCRQLAEKQMPADQWKGIWAVSRGGLVPGAILARELGIRYVDTICISSYDHDHQRDMTVLKAPEGDGEGYLIVEDLVDSGDTARKLREMYPKAKLIAVCAKPSGKELLDDYVVDIAQDTWIEQPWDMALAYAEPVNRKQK.

5-phospho-alpha-D-ribose 1-diphosphate-binding positions include 37-38 (RG), Arg-69, and 88-96 (EDLVDSGDT). Arg-69 provides a ligand contact to GMP. Asp-89 is a Mg(2+) binding site. Residues Asp-92 and Ile-135 each coordinate guanine. 2 residues coordinate xanthine: Asp-92 and Ile-135. Residues 92–96 (DSGDT) and 134–135 (WI) each bind GMP.

The protein belongs to the purine/pyrimidine phosphoribosyltransferase family. XGPT subfamily. In terms of assembly, homotetramer. Mg(2+) serves as cofactor.

It is found in the cell inner membrane. The enzyme catalyses GMP + diphosphate = guanine + 5-phospho-alpha-D-ribose 1-diphosphate. It catalyses the reaction XMP + diphosphate = xanthine + 5-phospho-alpha-D-ribose 1-diphosphate. It carries out the reaction IMP + diphosphate = hypoxanthine + 5-phospho-alpha-D-ribose 1-diphosphate. It participates in purine metabolism; GMP biosynthesis via salvage pathway; GMP from guanine: step 1/1. It functions in the pathway purine metabolism; XMP biosynthesis via salvage pathway; XMP from xanthine: step 1/1. In terms of biological role, purine salvage pathway enzyme that catalyzes the transfer of the ribosyl-5-phosphate group from 5-phospho-alpha-D-ribose 1-diphosphate (PRPP) to the N9 position of the 6-oxopurines guanine and xanthine to form the corresponding ribonucleotides GMP (guanosine 5'-monophosphate) and XMP (xanthosine 5'-monophosphate), with the release of PPi. To a lesser extent, also acts on hypoxanthine. The protein is Xanthine-guanine phosphoribosyltransferase of Vibrio vulnificus (strain CMCP6).